Here is a 369-residue protein sequence, read N- to C-terminus: Polycomb group protein FERTILIZATION-INDEPENDENT ENDOSPERM (369 aa).

WD repeat units lie at residues 31–73 (EGKK…AISA), 81–123 (DKEE…IHKS), 126–166 (GHGD…CILI), 172–212 (GHRY…TYVE), 238–275 (IHTN…NSPG), 287–328 (VPMC…PVLI), and 335–368 (QSKS…DVIT).

Belongs to the WD repeat ESC family. In terms of assembly, interacts directly with MEA. These two proteins are probably indirectly associated with FIS2. In plants, PcG complexes are probably composed of a member of the EZ family (CLF or MEA), FIE, and a member of the VEFS family (FIS2, VRN2 or EMF2). Component of the plant homeodomain / polycomb repressive complex 2 (PHD-PRC2) large complex during prolonged cold, composed of core PRC2 components (VRN2, EZA1, FIE and MSI1), and three related PHD finger proteins (VIL1, VIL2 and VIN3) that mediates histone H3 trimethylation on 'Lys-27' (H3K27me3). Binds to ALP1. Expressed in cauline leaves, root and stems. In the male reproductive organ, it is expressed in the developing anther; and is abundant in microspore mother cells, in microsporocytes and in the tapetum, but is absent from vascular bundles, the connective tissue and the filament. It is also absent from pollen grains at subsequent developmental stages. In the developing female reproductive organs, it is highly expressed in all cells of the young ovules primordium before archesporial differentiation. Then, it is highly expressed in the ovule sporophytic tissue and the megaspore mother cell before meiosis, but is absent from placenta or the developing carpel. Then, it decreases.

It is found in the nucleus. In terms of biological role, polycomb group (PcG) protein. PcG proteins act by forming multiprotein complexes, which are required to maintain the transcriptionally repressive state of homeotic genes throughout development. PcG proteins are not required to initiate repression, but to maintain it during later stages of development. They probably act via the methylation of histones, rendering chromatin heritably changed in its expressibility. Required to prevent the proliferation of the central cell by repressing unknown target genes before fertilization. Probably also involved in floral repression mechanism established during early plant development. Regulates the anteroposterior organization of the endosperm. Interacts with the promoter and represses the transcription of genes such as PHE1, that are paternally active and maternally silenced. This Arabidopsis thaliana (Mouse-ear cress) protein is Polycomb group protein FERTILIZATION-INDEPENDENT ENDOSPERM (FIE).